The sequence spans 577 residues: MLTPAFDLSQDPDFLTIAIRVPYARVSEFDVYFEGSDFKFYAKPYFLRLTLPGRIVENGSEQGSYDADKGIFTIRLPKETPGQHFEGLNMLTALLAPRKSRTAKPLVEEIGASEIPEEVVDDEEFDWEIEQTPCEEVSESALNPQCHYGFGNLRSGVLQRLQDELSDVIDIKDPDFTPAAERRQKRLAAELAKFDPDHYLADFFEDEAIEQILKYNPWWTDKYSKMMAFLEKSQEQENHATLVSFSEEEKYQLRKFVNKSYLLDKRACRQVCYSLIDILLAYCYETRVTEGEKNVESAWNIRKLSPTLCWFETWTNVHDIMVSFGRRVLCYPLYRHFKLVMKAYRDTIKILQLGKSAVLKCLLDIHKIFQENDPAYILNDLYISDYCVWIQKVKSKKLAALAEALKEVSLTKAQLGLELEELEAAALLVQEEETALKAAHSVSGQQTLCSSSEASDSEDSDSSVSSGNEDSGSDSEQDELKDSPSETVSSLQGPFLEESSAFLIVDGGVRRNTAIQESDASQGKPLASSWPLGVSGPLIEELGEQLKTTVQVSEPKGTTAVNRSNIQERDGCQTPNN.

The CS domain occupies Met-1–Asn-89. Disordered stretches follow at residues Thr-447–Gln-492 and Thr-549–Asn-577.

The protein belongs to the SHQ1 family. As to quaternary structure, directly interacts with DKC1 alone, but not in the context of the core trimer composed of DKC1, NOP10 and NHP2, nor in the presence of NAF1. Does not interact with NAF1.

Its subcellular location is the cytoplasm. The protein resides in the cytosol. It is found in the nucleus. It localises to the nucleoplasm. In terms of biological role, required for the quantitative accumulation of H/ACA ribonucleoproteins (RNPs), including telomerase, probably through the stabilization of DKC1, from the time of its synthesis until its association with NOP10, NHP2, and NAF1 at the nascent H/ACA RNA. This chain is Protein SHQ1 homolog (SHQ1), found in Homo sapiens (Human).